We begin with the raw amino-acid sequence, 101 residues long: Feather keratin Cos2-3 (101 aa).

Position 2 is an N-acetylserine (Ser2).

It belongs to the avian keratin family. The avian keratins (F-ker, S-ker, C-ker and B-ker) are a complex mixture of very similar polypeptides.

The protein is Feather keratin Cos2-3 of Columba livia (Rock dove).